Consider the following 1363-residue polypeptide: Xanthine dehydrogenase (1363 aa).

The 2Fe-2S ferredoxin-type domain maps to 35–121; the sequence is DTIRFYLNGT…GKHVITVEGI (87 aa). Residues Cys-73, Cys-78, Cys-81, Cys-103, Cys-142, Cys-145, Cys-177, and Cys-179 each contribute to the [2Fe-2S] cluster site. One can recognise an FAD-binding PCMH-type domain in the interval 266 to 450; sequence FGNKRKKWYR…SSLRIPTASE (185 aa). Residues 294 to 301, Phe-374, 384 to 388, Asp-397, and Lys-459 each bind FAD; these read LIGGSTET and SPAGN. Positions 798 and 829 each coordinate Mo-molybdopterin. Substrate contacts are provided by Glu-833 and Arg-911. Mo-molybdopterin is bound at residue Arg-943. Substrate-binding residues include Phe-945 and Thr-1041. Residue Ala-1110 coordinates Mo-molybdopterin. The active-site Proton acceptor is the Glu-1295.

The protein belongs to the xanthine dehydrogenase family. FAD is required as a cofactor. Mo-molybdopterin serves as cofactor. Requires [2Fe-2S] cluster as cofactor.

The protein localises to the peroxisome. It catalyses the reaction xanthine + NAD(+) + H2O = urate + NADH + H(+). The catalysed reaction is hypoxanthine + NAD(+) + H2O = xanthine + NADH + H(+). Its function is as follows. Key enzyme in purine degradation. Catalyzes the oxidation of hypoxanthine to xanthine. Catalyzes the oxidation of xanthine to uric acid. This is Xanthine dehydrogenase (hxA) from Emericella nidulans (strain FGSC A4 / ATCC 38163 / CBS 112.46 / NRRL 194 / M139) (Aspergillus nidulans).